A 511-amino-acid chain; its full sequence is Anthranilate synthase component 1 (511 aa).

The disordered stretch occupies residues 1 to 36 (MTTHAAEAPTTDPQGAPGSQKTPDATEAEEAARATV). Residues 11–23 (TDPQGAPGSQKTP) are compositionally biased toward polar residues. L-tryptophan-binding positions include Ser84 and 292–294 (PYM). A chorismate-binding site is contributed by 328 to 329 (GT). Glu355 is a binding site for Mg(2+). Residues Tyr443, Arg463, 477–479 (GAG), and Gly479 each bind chorismate. Position 492 (Glu492) interacts with Mg(2+).

Belongs to the anthranilate synthase component I family. In terms of assembly, heterotetramer consisting of two non-identical subunits: a beta subunit (TrpG) and a large alpha subunit (TrpE). Requires Mg(2+) as cofactor.

The catalysed reaction is chorismate + L-glutamine = anthranilate + pyruvate + L-glutamate + H(+). It functions in the pathway amino-acid biosynthesis; L-tryptophan biosynthesis; L-tryptophan from chorismate: step 1/5. With respect to regulation, feedback inhibited by tryptophan. Functionally, part of a heterotetrameric complex that catalyzes the two-step biosynthesis of anthranilate, an intermediate in the biosynthesis of L-tryptophan. In the first step, the glutamine-binding beta subunit (TrpG) of anthranilate synthase (AS) provides the glutamine amidotransferase activity which generates ammonia as a substrate that, along with chorismate, is used in the second step, catalyzed by the large alpha subunit of AS (TrpE) to produce anthranilate. In the absence of TrpG, TrpE can synthesize anthranilate directly from chorismate and high concentrations of ammonia. This is Anthranilate synthase component 1 (trpE) from Streptomyces coelicolor (strain ATCC BAA-471 / A3(2) / M145).